The following is a 169-amino-acid chain: Superoxide dismutase [Cu-Zn] 1 (169 aa).

Positions 1-18 (MFEQWDALCAVLFSFSIA) are cleaved as a signal peptide. Cu cation-binding residues include His65, His67, and His83. Cys72 and Cys165 are joined by a disulfide. Residues His83, His91, His100, and Asp103 each coordinate Zn(2+). Residue His145 participates in Cu cation binding.

It belongs to the Cu-Zn superoxide dismutase family. Requires Cu cation as cofactor. The cofactor is Zn(2+).

It catalyses the reaction 2 superoxide + 2 H(+) = H2O2 + O2. Its function is as follows. Destroys radicals which are normally produced within the cells and which are toxic to biological systems. The chain is Superoxide dismutase [Cu-Zn] 1 (sodC1) from Aquifex aeolicus (strain VF5).